The sequence spans 92 residues: Transcription factor PRE4 (92 aa).

Residues 5–60 (KSRSRQTGASMITDEQINDLVLQLHRLLPELANNRRSGKVSASRVLQETCSYIRNL) form the bHLH domain.

Belongs to the bHLH protein family. In terms of assembly, interacts with HFR1 and IBH1. As to expression, expressed in roots, leaves, stems and flowers.

The protein localises to the nucleus. Atypical and probable non DNA-binding bHLH transcription factor that integrates multiple signaling pathways to regulate cell elongation and plant development. Regulates light responses by binding and inhibiting the activity of the bHLH transcription factor HFR1, a critical regulator of light signaling and shade avoidance. May have a regulatory role in various aspects of gibberellin-dependent growth and development. In Arabidopsis thaliana (Mouse-ear cress), this protein is Transcription factor PRE4 (PRE4).